Here is a 367-residue protein sequence, read N- to C-terminus: Peroxisome biogenesis protein 16 (367 aa).

The disordered stretch occupies residues Gly135–Asn173. A compositionally biased stretch (polar residues) spans Gln147 to Arg159. A run of 2 helical transmembrane segments spans residues Ala237–Ile257 and Ser264–Asn284.

This sequence belongs to the peroxin-16 family. In terms of assembly, interacts with APEM9 (via both N- and C-terminus). Post-translationally, the detection of an additional immunorelated polypeptide of 52 kDa suggests a post-translational modification of PEX16. As to expression, expressed in roots, siliques, seeds, cotyledons, leaves and flowers. Low expression in leaves and roots.

It is found in the peroxisome membrane. The protein resides in the endoplasmic reticulum membrane. Its function is as follows. Involved in the formation of peroxisomes, lipid bodies and protein bodies. In Arabidopsis thaliana (Mouse-ear cress), this protein is Peroxisome biogenesis protein 16.